A 469-amino-acid chain; its full sequence is Sulfate adenylyltransferase subunit 1 (469 aa).

Residues K22–L224 enclose the tr-type G domain. The interval G31–S38 is G1. GTP is bound at residue G31–S38. The G2 stretch occupies residues G89–D93. The segment at D110–G113 is G3. Residues D110–H114 and N165–D168 contribute to the GTP site. The G4 stretch occupies residues N165–D168. The tract at residues S202–L204 is G5.

This sequence belongs to the TRAFAC class translation factor GTPase superfamily. Classic translation factor GTPase family. CysN/NodQ subfamily. As to quaternary structure, heterodimer composed of CysD, the smaller subunit, and CysN.

It catalyses the reaction sulfate + ATP + H(+) = adenosine 5'-phosphosulfate + diphosphate. The protein operates within sulfur metabolism; hydrogen sulfide biosynthesis; sulfite from sulfate: step 1/3. With CysD forms the ATP sulfurylase (ATPS) that catalyzes the adenylation of sulfate producing adenosine 5'-phosphosulfate (APS) and diphosphate, the first enzymatic step in sulfur assimilation pathway. APS synthesis involves the formation of a high-energy phosphoric-sulfuric acid anhydride bond driven by GTP hydrolysis by CysN coupled to ATP hydrolysis by CysD. The polypeptide is Sulfate adenylyltransferase subunit 1 (Psychromonas ingrahamii (strain DSM 17664 / CCUG 51855 / 37)).